The primary structure comprises 541 residues: Chaperonin GroEL 2 (541 aa).

ATP contacts are provided by residues 29–32, 86–90, Gly-413, 476–478, and Asp-492; these read TLGP, DGTTT, and NAA.

The protein belongs to the chaperonin (HSP60) family. Forms a cylinder of 14 subunits composed of two heptameric rings stacked back-to-back. Interacts with the co-chaperonin GroES.

It is found in the secreted. The protein localises to the capsule. The protein resides in the cell surface. It localises to the cell wall. The catalysed reaction is ATP + H2O + a folded polypeptide = ADP + phosphate + an unfolded polypeptide.. Functionally, together with its co-chaperonin GroES, plays an essential role in assisting protein folding. The GroEL-GroES system forms a nano-cage that allows encapsulation of the non-native substrate proteins and provides a physical environment optimized to promote and accelerate protein folding. This chain is Chaperonin GroEL 2, found in Mycolicibacterium vanbaalenii (strain DSM 7251 / JCM 13017 / BCRC 16820 / KCTC 9966 / NRRL B-24157 / PYR-1) (Mycobacterium vanbaalenii).